Here is a 271-residue protein sequence, read N- to C-terminus: Type III pantothenate kinase (271 aa).

5 to 12 (DISNSVTK) contacts ATP. Substrate contacts are provided by residues Tyr85 and 92-95 (GADR). The active-site Proton acceptor is Asp94. Residue Asp114 participates in K(+) binding. An ATP-binding site is contributed by Thr117. Residue Thr169 coordinates substrate.

It belongs to the type III pantothenate kinase family. In terms of assembly, homodimer. The cofactor is NH4(+). Requires K(+) as cofactor.

The protein resides in the cytoplasm. The catalysed reaction is (R)-pantothenate + ATP = (R)-4'-phosphopantothenate + ADP + H(+). It participates in cofactor biosynthesis; coenzyme A biosynthesis; CoA from (R)-pantothenate: step 1/5. Functionally, catalyzes the phosphorylation of pantothenate (Pan), the first step in CoA biosynthesis. This is Type III pantothenate kinase from Methylacidiphilum infernorum (isolate V4) (Methylokorus infernorum (strain V4)).